Here is a 428-residue protein sequence, read N- to C-terminus: Histidinol dehydrogenase (428 aa).

The substrate site is built by Ser232, Gln254, and His257. Zn(2+) contacts are provided by Gln254 and His257. Catalysis depends on proton acceptor residues Glu324 and His325. Substrate is bound by residues His325, Asp358, Glu412, and His417. Asp358 is a binding site for Zn(2+). Residue His417 participates in Zn(2+) binding.

The protein belongs to the histidinol dehydrogenase family. The cofactor is Zn(2+).

The catalysed reaction is L-histidinol + 2 NAD(+) + H2O = L-histidine + 2 NADH + 3 H(+). It participates in amino-acid biosynthesis; L-histidine biosynthesis; L-histidine from 5-phospho-alpha-D-ribose 1-diphosphate: step 9/9. Catalyzes the sequential NAD-dependent oxidations of L-histidinol to L-histidinaldehyde and then to L-histidine. This chain is Histidinol dehydrogenase, found in Thermotoga maritima (strain ATCC 43589 / DSM 3109 / JCM 10099 / NBRC 100826 / MSB8).